A 208-amino-acid polypeptide reads, in one-letter code: FMN-dependent NADH:quinone oxidoreductase 4 (208 aa).

The protein belongs to the azoreductase type 1 family. As to quaternary structure, homodimer. FMN is required as a cofactor.

It catalyses the reaction 2 a quinone + NADH + H(+) = 2 a 1,4-benzosemiquinone + NAD(+). It carries out the reaction N,N-dimethyl-1,4-phenylenediamine + anthranilate + 2 NAD(+) = 2-(4-dimethylaminophenyl)diazenylbenzoate + 2 NADH + 2 H(+). Functionally, quinone reductase that provides resistance to thiol-specific stress caused by electrophilic quinones. Its function is as follows. Also exhibits azoreductase activity. Catalyzes the reductive cleavage of the azo bond in aromatic azo compounds to the corresponding amines. The sequence is that of FMN-dependent NADH:quinone oxidoreductase 4 from Bacillus anthracis.